Here is a 54-residue protein sequence, read N- to C-terminus: Conotoxin vc5c (54 aa).

An N-terminal signal peptide occupies residues 1–14; it reads VILLLLIASIPSDA. A propeptide spanning residues 15–43 is cleaved from the precursor; it reads VQLKTKDDMPLASFHGNARRTLQMLSNKR. Position 50 is a 4-carboxyglutamate (Glu-50). Trp-51 is modified (6'-bromotryptophan).

This sequence belongs to the conotoxin T superfamily. Contains 2 disulfide bonds that can be either 'C1-C3, C2-C4' or 'C1-C4, C2-C3', since these disulfide connectivities have been observed for conotoxins with cysteine framework V (for examples, see AC P0DQQ7 and AC P81755). In terms of tissue distribution, expressed by the venom duct.

The protein localises to the secreted. The chain is Conotoxin vc5c from Conus victoriae (Queen Victoria cone).